A 356-amino-acid polypeptide reads, in one-letter code: Phosphoserine aminotransferase (356 aa).

Arg41 serves as a coordination point for L-glutamate. Pyridoxal 5'-phosphate-binding positions include 76-77 (AS), Trp102, Thr150, Asp169, and Gln192. Lys193 carries the post-translational modification N6-(pyridoxal phosphate)lysine. 234–235 (NT) is a pyridoxal 5'-phosphate binding site.

Belongs to the class-V pyridoxal-phosphate-dependent aminotransferase family. SerC subfamily. Homodimer. Pyridoxal 5'-phosphate is required as a cofactor.

It localises to the cytoplasm. The enzyme catalyses O-phospho-L-serine + 2-oxoglutarate = 3-phosphooxypyruvate + L-glutamate. It carries out the reaction 4-(phosphooxy)-L-threonine + 2-oxoglutarate = (R)-3-hydroxy-2-oxo-4-phosphooxybutanoate + L-glutamate. The protein operates within amino-acid biosynthesis; L-serine biosynthesis; L-serine from 3-phospho-D-glycerate: step 2/3. It participates in cofactor biosynthesis; pyridoxine 5'-phosphate biosynthesis; pyridoxine 5'-phosphate from D-erythrose 4-phosphate: step 3/5. Catalyzes the reversible conversion of 3-phosphohydroxypyruvate to phosphoserine and of 3-hydroxy-2-oxo-4-phosphonooxybutanoate to phosphohydroxythreonine. The sequence is that of Phosphoserine aminotransferase from Flavobacterium johnsoniae (strain ATCC 17061 / DSM 2064 / JCM 8514 / BCRC 14874 / CCUG 350202 / NBRC 14942 / NCIMB 11054 / UW101) (Cytophaga johnsonae).